Reading from the N-terminus, the 194-residue chain is Molybdenum cofactor guanylyltransferase (194 aa).

Residues 12–14 (LAG), Lys25, Asn53, Asp71, and Asp101 each bind GTP. Residue Asp101 participates in Mg(2+) binding.

Belongs to the MobA family. In terms of assembly, monomer. It depends on Mg(2+) as a cofactor.

The protein resides in the cytoplasm. The catalysed reaction is Mo-molybdopterin + GTP + H(+) = Mo-molybdopterin guanine dinucleotide + diphosphate. Functionally, transfers a GMP moiety from GTP to Mo-molybdopterin (Mo-MPT) cofactor (Moco or molybdenum cofactor) to form Mo-molybdopterin guanine dinucleotide (Mo-MGD) cofactor. The protein is Molybdenum cofactor guanylyltransferase of Escherichia coli O6:H1 (strain CFT073 / ATCC 700928 / UPEC).